Reading from the N-terminus, the 184-residue chain is Pyridoxal 5'-phosphate synthase subunit PdxT (184 aa).

Residue Gly-46–Ser-48 participates in L-glutamine binding. The active-site Nucleophile is the Cys-75. L-glutamine is bound by residues Arg-101 and Ile-129–Arg-130. Residues His-165 and Glu-167 each act as charge relay system in the active site.

The protein belongs to the glutaminase PdxT/SNO family. As to quaternary structure, in the presence of PdxS, forms a dodecamer of heterodimers. Only shows activity in the heterodimer.

It catalyses the reaction aldehydo-D-ribose 5-phosphate + D-glyceraldehyde 3-phosphate + L-glutamine = pyridoxal 5'-phosphate + L-glutamate + phosphate + 3 H2O + H(+). The catalysed reaction is L-glutamine + H2O = L-glutamate + NH4(+). It participates in cofactor biosynthesis; pyridoxal 5'-phosphate biosynthesis. Functionally, catalyzes the hydrolysis of glutamine to glutamate and ammonia as part of the biosynthesis of pyridoxal 5'-phosphate. The resulting ammonia molecule is channeled to the active site of PdxS. The sequence is that of Pyridoxal 5'-phosphate synthase subunit PdxT from Staphylococcus haemolyticus (strain JCSC1435).